The sequence spans 256 residues: 1-(5-phosphoribosyl)-5-[(5-phosphoribosylamino)methylideneamino] imidazole-4-carboxamide isomerase (256 aa).

D8 serves as the catalytic Proton acceptor. The Proton donor role is filled by D129.

It belongs to the HisA/HisF family.

Its subcellular location is the cytoplasm. It catalyses the reaction 1-(5-phospho-beta-D-ribosyl)-5-[(5-phospho-beta-D-ribosylamino)methylideneamino]imidazole-4-carboxamide = 5-[(5-phospho-1-deoxy-D-ribulos-1-ylimino)methylamino]-1-(5-phospho-beta-D-ribosyl)imidazole-4-carboxamide. It participates in amino-acid biosynthesis; L-histidine biosynthesis; L-histidine from 5-phospho-alpha-D-ribose 1-diphosphate: step 4/9. The polypeptide is 1-(5-phosphoribosyl)-5-[(5-phosphoribosylamino)methylideneamino] imidazole-4-carboxamide isomerase (Picosynechococcus sp. (strain ATCC 27264 / PCC 7002 / PR-6) (Agmenellum quadruplicatum)).